A 428-amino-acid polypeptide reads, in one-letter code: Protein Wnt-8b (428 aa).

An N-terminal signal peptide occupies residues 1–22 (MFYTGSFWFIFFILPAIPFCHS). Cys54 and Cys65 are oxidised to a cystine. Residues Asn123 and Asn176 are each glycosylated (N-linked (GlcNAc...) asparagine). 10 disulfide bridges follow: Cys177/Cys185, Cys187/Cys205, Cys253/Cys267, Cys255/Cys262, Cys329/Cys367, Cys345/Cys360, Cys364/Cys406, Cys382/Cys397, Cys384/Cys394, and Cys389/Cys390. A lipid anchor (O-palmitoleoyl serine) is attached at Ser259. Residue Asn332 is glycosylated (N-linked (GlcNAc...) asparagine).

This sequence belongs to the Wnt family. Post-translationally, palmitoleoylation is required for efficient binding to frizzled receptors. Depalmitoleoylation leads to Wnt signaling pathway inhibition. Proteolytic processing by tiki1 and tiki2 promotes oxidation and formation of large disulfide-bond oligomers, leading to inactivation of wnt8b. In terms of tissue distribution, in adults, in brain.

It is found in the secreted. The protein localises to the extracellular space. Its subcellular location is the extracellular matrix. Ligand for members of the frizzled family of seven transmembrane receptors. Plays a role in the initiation of dorsal axis development. May activate a Nieuwkoop center-like signaling pathway. The protein is Protein Wnt-8b (wnt8b) of Xenopus laevis (African clawed frog).